Here is a 386-residue protein sequence, read N- to C-terminus: Phosphoglycerate kinase (386 aa).

Substrate is bound by residues aspartate 21–asparagine 23, arginine 36, histidine 59–arginine 62, arginine 113, and arginine 146. Residues lysine 197, glutamate 314, and glycine 340–threonine 343 each bind ATP.

This sequence belongs to the phosphoglycerate kinase family. In terms of assembly, monomer.

The protein resides in the cytoplasm. The enzyme catalyses (2R)-3-phosphoglycerate + ATP = (2R)-3-phospho-glyceroyl phosphate + ADP. The protein operates within carbohydrate degradation; glycolysis; pyruvate from D-glyceraldehyde 3-phosphate: step 2/5. The protein is Phosphoglycerate kinase of Vibrio vulnificus (strain CMCP6).